The following is a 344-amino-acid chain: Protein RecA (344 aa).

ATP is bound at residue 65 to 72 (GPESSGKT).

This sequence belongs to the RecA family.

It localises to the cytoplasm. Can catalyze the hydrolysis of ATP in the presence of single-stranded DNA, the ATP-dependent uptake of single-stranded DNA by duplex DNA, and the ATP-dependent hybridization of homologous single-stranded DNAs. It interacts with LexA causing its activation and leading to its autocatalytic cleavage. The sequence is that of Protein RecA from Xanthomonas oryzae pv. oryzae (strain PXO99A).